The following is a 516-amino-acid chain: Gamma-aminobutyrate transaminase 1, mitochondrial (516 aa).

Residues 1 to 47 (MVIARGLLRSNASSSSSQAINLLKYVTSTGSLQGHTQNLCDASTRHF) constitute a mitochondrion transit peptide. A pyridoxal 5'-phosphate-binding site is contributed by 171 to 172 (GS). A substrate-binding site is contributed by Tyr-204. Asp-311 contacts pyridoxal 5'-phosphate. Lys-340 provides a ligand contact to substrate. Lys-340 bears the N6-(pyridoxal phosphate)lysine mark.

Belongs to the class-III pyridoxal-phosphate-dependent aminotransferase family. In terms of tissue distribution, expressed in roots, stems and panicles.

It localises to the mitochondrion. The catalysed reaction is 4-aminobutanoate + pyruvate = succinate semialdehyde + L-alanine. The enzyme catalyses 4-aminobutanoate + glyoxylate = succinate semialdehyde + glycine. Functionally, transaminase that degrades gamma-amino butyric acid (GABA) and uses pyruvate as amino-group acceptor, but not 2-oxoglutarate. Not involved in the interaction with blast fungus. This Oryza sativa subsp. japonica (Rice) protein is Gamma-aminobutyrate transaminase 1, mitochondrial (OSL2).